The primary structure comprises 389 residues: Aminomethyltransferase (389 aa).

The protein belongs to the GcvT family. As to quaternary structure, the glycine cleavage system is composed of four proteins: P, T, L and H.

It catalyses the reaction N(6)-[(R)-S(8)-aminomethyldihydrolipoyl]-L-lysyl-[protein] + (6S)-5,6,7,8-tetrahydrofolate = N(6)-[(R)-dihydrolipoyl]-L-lysyl-[protein] + (6R)-5,10-methylene-5,6,7,8-tetrahydrofolate + NH4(+). In terms of biological role, the glycine cleavage system catalyzes the degradation of glycine. This Corynebacterium jeikeium (strain K411) protein is Aminomethyltransferase.